A 256-amino-acid polypeptide reads, in one-letter code: MQTEQQRAVTRLCIQCGLFLLQHGAESALVDELSSRLGRALGMDSVESSISSNAIVLTTIKDGQCLTSTRKNHDRGINMHVVTEVQHIVILAEHHLLDYKGVEKRFSQIQPLRYPRWLVALMVGLSCACFCKLNNGGWDGAVITFFASTTAMYIRQLLAQRHLHPQINFCLTAFAATTISGLLLQLPTFSNTPTIAMAASVLLLVPGFPLINAVADMFKGHINTGLARWAIASLLTLATCVGVVMALTIWGLRGWV.

Topologically, residues 1-113 are cytoplasmic; sequence MQTEQQRAVT…KRFSQIQPLR (113 aa). Residues 114-135 form a helical membrane-spanning segment; it reads YPRWLVALMVGLSCACFCKLNN. At 136 to 140 the chain is on the periplasmic side; that stretch reads GGWDG. The chain crosses the membrane as a helical span at residues 141–158; the sequence is AVITFFASTTAMYIRQLL. Residues 159 to 168 lie on the Cytoplasmic side of the membrane; sequence AQRHLHPQIN. The helical transmembrane segment at 169 to 189 threads the bilayer; the sequence is FCLTAFAATTISGLLLQLPTF. At 190–194 the chain is on the periplasmic side; it reads SNTPT. The chain crosses the membrane as a helical span at residues 195–215; it reads IAMAASVLLLVPGFPLINAVA. At 216 to 228 the chain is on the cytoplasmic side; sequence DMFKGHINTGLAR. The helical transmembrane segment at 229–249 threads the bilayer; sequence WAIASLLTLATCVGVVMALTI. Topologically, residues 250-256 are periplasmic; that stretch reads WGLRGWV.

This sequence belongs to the ThrE exporter (TC 2.A.79) family. As to quaternary structure, the transporter is composed of YjjB and YjjP.

It is found in the cell inner membrane. Involved in succinate export with YjjB. Both proteins are required for export. Contributes to succinate production under both aerobic and anaerobic conditions. This is Probable succinate transporter subunit YjjP (yjjP) from Escherichia coli (strain K12).